A 138-amino-acid polypeptide reads, in one-letter code: Cysteine desulfuration protein SufE (138 aa).

C51 serves as the catalytic Cysteine persulfide intermediate.

It belongs to the SufE family. Homodimer. Interacts with SufS.

It localises to the cytoplasm. It functions in the pathway cofactor biosynthesis; iron-sulfur cluster biosynthesis. In terms of biological role, participates in cysteine desulfuration mediated by SufS. Cysteine desulfuration mobilizes sulfur from L-cysteine to yield L-alanine and constitutes an essential step in sulfur metabolism for biosynthesis of a variety of sulfur-containing biomolecules. Functions as a sulfur acceptor for SufS, by mediating the direct transfer of the sulfur atom from the S-sulfanylcysteine of SufS, an intermediate product of cysteine desulfuration process. The protein is Cysteine desulfuration protein SufE of Shigella boydii serotype 18 (strain CDC 3083-94 / BS512).